A 548-amino-acid polypeptide reads, in one-letter code: Chaperonin GroEL (548 aa).

ATP is bound by residues 29–32, K50, 86–90, G414, 478–480, and D494; these read TMGP, DGTTT, and NAA.

It belongs to the chaperonin (HSP60) family. As to quaternary structure, forms a cylinder of 14 subunits composed of two heptameric rings stacked back-to-back. Interacts with the co-chaperonin GroES.

The protein localises to the cytoplasm. It carries out the reaction ATP + H2O + a folded polypeptide = ADP + phosphate + an unfolded polypeptide.. Functionally, together with its co-chaperonin GroES, plays an essential role in assisting protein folding. The GroEL-GroES system forms a nano-cage that allows encapsulation of the non-native substrate proteins and provides a physical environment optimized to promote and accelerate protein folding. The polypeptide is Chaperonin GroEL (Legionella pneumophila (strain Corby)).